We begin with the raw amino-acid sequence, 847 residues long: Leucine--tRNA ligase (847 aa).

The 'HIGH' region signature appears at 43–53 (PYPSGKLHMGH). Positions 607 to 611 (KMSKS) match the 'KMSKS' region motif. Position 610 (Lys-610) interacts with ATP.

Belongs to the class-I aminoacyl-tRNA synthetase family.

The protein resides in the cytoplasm. The catalysed reaction is tRNA(Leu) + L-leucine + ATP = L-leucyl-tRNA(Leu) + AMP + diphosphate. The protein is Leucine--tRNA ligase of Buchnera aphidicola subsp. Cinara cedri (strain Cc).